A 42-amino-acid chain; its full sequence is MQDVKTYLSTAPVLATLWFGFLAGLLIEINRSFSDALVLPFF.

A helical transmembrane segment spans residues 7–27 (YLSTAPVLATLWFGFLAGLLI).

Belongs to the PsaJ family.

Its subcellular location is the plastid. The protein localises to the chloroplast thylakoid membrane. May help in the organization of the PsaE and PsaF subunits. In Anthoceros angustus (Hornwort), this protein is Photosystem I reaction center subunit IX.